The following is a 413-amino-acid chain: Serine hydroxymethyltransferase (413 aa).

Residues Leu117 and 121–123 (GHL) each bind (6S)-5,6,7,8-tetrahydrofolate. N6-(pyridoxal phosphate)lysine is present on Lys226. (6S)-5,6,7,8-tetrahydrofolate is bound at residue 349–351 (SPF).

The protein belongs to the SHMT family. Homodimer. Pyridoxal 5'-phosphate is required as a cofactor.

It localises to the cytoplasm. The enzyme catalyses (6R)-5,10-methylene-5,6,7,8-tetrahydrofolate + glycine + H2O = (6S)-5,6,7,8-tetrahydrofolate + L-serine. Its pathway is one-carbon metabolism; tetrahydrofolate interconversion. It participates in amino-acid biosynthesis; glycine biosynthesis; glycine from L-serine: step 1/1. Catalyzes the reversible interconversion of serine and glycine with tetrahydrofolate (THF) serving as the one-carbon carrier. This reaction serves as the major source of one-carbon groups required for the biosynthesis of purines, thymidylate, methionine, and other important biomolecules. Also exhibits THF-independent aldolase activity toward beta-hydroxyamino acids, producing glycine and aldehydes, via a retro-aldol mechanism. The sequence is that of Serine hydroxymethyltransferase from Listeria monocytogenes serovar 1/2a (strain ATCC BAA-679 / EGD-e).